Consider the following 39-residue polypeptide: Cytochrome b559 subunit beta (39 aa).

Residues 14–30 form a helical membrane-spanning segment; the sequence is WLTVHGLAVPTVSFLGS. His-18 serves as a coordination point for heme.

The protein belongs to the PsbE/PsbF family. Heterodimer of an alpha subunit and a beta subunit. PSII is composed of 1 copy each of membrane proteins PsbA, PsbB, PsbC, PsbD, PsbE, PsbF, PsbH, PsbI, PsbJ, PsbK, PsbL, PsbM, PsbT, PsbX, PsbY, PsbZ, Psb30/Ycf12, at least 3 peripheral proteins of the oxygen-evolving complex and a large number of cofactors. It forms dimeric complexes. Requires heme b as cofactor.

The protein resides in the plastid. It localises to the chloroplast thylakoid membrane. Its function is as follows. This b-type cytochrome is tightly associated with the reaction center of photosystem II (PSII). PSII is a light-driven water:plastoquinone oxidoreductase that uses light energy to abstract electrons from H(2)O, generating O(2) and a proton gradient subsequently used for ATP formation. It consists of a core antenna complex that captures photons, and an electron transfer chain that converts photonic excitation into a charge separation. This chain is Cytochrome b559 subunit beta, found in Lactuca sativa (Garden lettuce).